The following is a 311-amino-acid chain: MSYQDLKECKIITAFITPFHEDGSINFDAIPALIEHLLDHHTDGILLAGTTAESPTLTHDEELELFAAVQKIVNGRVPLIAGVGTNDTRDSIEFVKEVAEFGGFAAGLAIVPYYNKPSQEGMYQHFKAIADASDLPIIIYNIPGRVVVELTPETMLRLADHPNIIGVKECTSLANMAYLIEHKPEEFLVYTGEDGDAFHAMNLGADGVISVASHTNGDEMHEMFIAIAESDVKKAAAIQRKFIPKVNALFSYPSPAPVKAVLNYMGFEAGPTRLPLVPAPEEDAKRIIKVVVDGDYEATKATVTGVLRPDY.

Thr51 is a binding site for pyruvate. Residue Tyr140 is the Proton donor/acceptor of the active site. The active-site Schiff-base intermediate with substrate is Lys168. Residue Ile209 participates in pyruvate binding.

This sequence belongs to the DapA family. Homotetramer; dimer of dimers.

It is found in the cytoplasm. It catalyses the reaction L-aspartate 4-semialdehyde + pyruvate = (2S,4S)-4-hydroxy-2,3,4,5-tetrahydrodipicolinate + H2O + H(+). Its pathway is amino-acid biosynthesis; L-lysine biosynthesis via DAP pathway; (S)-tetrahydrodipicolinate from L-aspartate: step 3/4. In terms of biological role, catalyzes the condensation of (S)-aspartate-beta-semialdehyde [(S)-ASA] and pyruvate to 4-hydroxy-tetrahydrodipicolinate (HTPA). The polypeptide is 4-hydroxy-tetrahydrodipicolinate synthase (Streptococcus pneumoniae (strain ATCC BAA-255 / R6)).